The sequence spans 147 residues: Bis(5'-nucleosyl)-tetraphosphatase [asymmetrical] (147 aa).

The residue at position 2 (alanine 2) is an N-acetylalanine. The Nudix hydrolase domain occupies 2–139; that stretch reads ALRACGLIIF…DMKAVLQEGH (138 aa). The short motif at 43-64 is the Nudix box element; that stretch reads GHVEPGESDLQTALRETQEEAG.

It belongs to the Nudix hydrolase family. It depends on a divalent metal cation as a cofactor.

It catalyses the reaction P(1),P(4)-bis(5'-guanosyl) tetraphosphate + H2O = GMP + GTP + 2 H(+). The enzyme catalyses a 5'-end CoA-ribonucleoside in mRNA + H2O = a 5'-end phospho-adenosine-phospho-ribonucleoside in mRNA + (R)-4'-phosphopantetheine + 2 H(+). The catalysed reaction is a 5'-end FAD-phospho-ribonucleoside in mRNA + H2O = a 5'-end phospho-adenosine-phospho-ribonucleoside in mRNA + FMN + 2 H(+). Inhibited by fluoride ions. Catalyzes the asymmetric hydrolysis of diadenosine 5',5'''-P1,P4-tetraphosphate (Ap4A) to yield AMP and ATP. Exhibits decapping activity towards FAD-capped RNAs and dpCoA-capped RNAs in vitro. This Sus scrofa (Pig) protein is Bis(5'-nucleosyl)-tetraphosphatase [asymmetrical] (NUDT2).